The chain runs to 873 residues: V-type proton ATPase 116 kDa subunit a 2 (873 aa).

Residues 1–407 lie on the Cytoplasmic side of the membrane; the sequence is MGSLSRSEEM…TIITFPFLFS (407 aa). Residues 408 to 428 form a helical membrane-spanning segment; the sequence is CMFGDLGHGCIMLMAGLWFVL. Residues 429–445 lie on the Lumenal side of the membrane; that stretch reads REKNLQARNIKDEIFNM. The helical transmembrane segment at 446 to 466 threads the bilayer; sequence FFGGRYIILLMGLFSIHAGII. Over 467-543 the chain is Cytoplasmic; it reads YNDMFAKSFN…NKLNFLNSMK (77 aa). The helical transmembrane segment at 544 to 564 threads the bilayer; sequence MKLSVILGISQMTFGVILSFF. 2 N-linked (GlcNAc...) asparagine glycosylation sites follow: Asn-565 and Asn-569. The Lumenal segment spans residues 565-574; it reads NHTYNKSKID. Residues 575 to 595 form a helical membrane-spanning segment; the sequence is IFTVFIPQMLFMGCIFMYLCL. Over 596–614 the chain is Cytoplasmic; that stretch reads QIILKWLFFWTKEATVFGQ. A helical membrane pass occupies residues 615–635; sequence IYPGSHCAPSLLIGLINMFMM. Topologically, residues 636 to 668 are lumenal; sequence KDRNAGFVVDGGKVNGEYREVETCYLSQWYPGQ. Residues 669 to 689 traverse the membrane as a helical segment; it reads SVIEMILVVIAVICVPVMLFG. Residues 690-785 lie on the Cytoplasmic side of the membrane; the sequence is KPIHHVMQQK…LWALSLAHAQ (96 aa). Residues 786–806 form a helical membrane-spanning segment; it reads LSEVLWHMVFVTGGLGISGTA. Position 807 (Gly-807) is a topological domain, lumenal. A helical membrane pass occupies residues 808-828; it reads FIAVYVVFFIFFVLTISILVL. Over 829–873 the chain is Cytoplasmic; it reads MEGLSAFLHTLRLHWVEFQSKFYLGLGYPFVPYSFKTALQEAEAA.

The protein belongs to the V-ATPase 116 kDa subunit family. V-ATPase is a heteromultimeric enzyme made up of two complexes: the ATP-hydrolytic V1 complex and the proton translocation V0 complex. The V1 complex consists of three catalytic AB heterodimers that form a heterohexamer, three peripheral stalks each consisting of EG heterodimers, one central rotor including subunits D and F, and the regulatory subunits C and H. The proton translocation complex V0 consists of the proton transport subunit a, a ring of proteolipid subunits c9c'', rotary subunit d, subunits e and f, and the accessory subunits vah-19/Ac45 and vah-20/PRR. Interacts with V-type proton ATPase subunit C vha-11. As to expression, expressed in the H-shaped excretory cell (at protein level). Expressed in hypodermal cells around the vulva. Expressed in the main epidermal syncytium. Expressed in the sheath cells associated with head and tail sensory organs; specifically, expressed in the apical sheath cells of the amphids and CEP neuron and in the sheath cells of the OLQ sensory organ.

The protein localises to the apical cell membrane. It localises to the endosome. It is found in the multivesicular body membrane. Functionally, subunit of the V0 complex of vacuolar(H+)-ATPase (V-ATPase), a multisubunit enzyme composed of a peripheral complex (V1) that hydrolyzes ATP and a membrane integral complex (V0) that translocates protons. V-ATPase is responsible for acidifying and maintaining the pH of intracellular compartments and in some cell types, is targeted to the plasma membrane, where it is responsible for acidifying the extracellular environment. Involved in the assembly of the V-ATPase complex. The V-ATPase is required for the function of the excretory canal. Independently of the V1 complex, the V0 complex of the V-ATPase is required for multivesicular body membrane fusion with the apical membrane of the epidermal cells during exosome release and thus regulates the release of cuticle components such as Hedgehog-related peptide wrt-2 but not collagen. Also, in the epidermis, regulates the trafficking of che-14 and rdy-2. Regulates the secretion of granular material found in the amphid channel and in controlling osmoregulation in the amphid pocket. This chain is V-type proton ATPase 116 kDa subunit a 2, found in Caenorhabditis elegans.